Reading from the N-terminus, the 226-residue chain is ATP-dependent dethiobiotin synthetase BioD (226 aa).

Glycine 12–valine 17 is a binding site for ATP. Threonine 16 lines the Mg(2+) pocket. Residue lysine 37 is part of the active site. Threonine 41 lines the substrate pocket. Residues aspartate 49, glutamate 108 to glycine 111, glycine 169 to serine 170, and proline 197 to glycine 199 each bind ATP. Aspartate 49 and glutamate 108 together coordinate Mg(2+).

The protein belongs to the dethiobiotin synthetase family. Homodimer. It depends on Mg(2+) as a cofactor.

It localises to the cytoplasm. The enzyme catalyses (7R,8S)-7,8-diammoniononanoate + CO2 + ATP = (4R,5S)-dethiobiotin + ADP + phosphate + 3 H(+). The protein operates within cofactor biosynthesis; biotin biosynthesis; biotin from 7,8-diaminononanoate: step 1/2. Functionally, catalyzes a mechanistically unusual reaction, the ATP-dependent insertion of CO2 between the N7 and N8 nitrogen atoms of 7,8-diaminopelargonic acid (DAPA, also called 7,8-diammoniononanoate) to form a ureido ring. The polypeptide is ATP-dependent dethiobiotin synthetase BioD (Mycolicibacterium gilvum (strain PYR-GCK) (Mycobacterium gilvum (strain PYR-GCK))).